A 275-amino-acid polypeptide reads, in one-letter code: T cell receptor alpha chain MC.7.G5 (275 aa).

The signal sequence occupies residues 1 to 21 (MACPGFLWALVISTCLEFSMA). The Ig-like V-type domain occupies 22–116 (QTVTQSQPEM…AAMYFCAYRS (95 aa)). The tract at residues 22-116 (QTVTQSQPEM…AAMYFCAYRS (95 aa)) is t cell receptor alpha variable 38-2DV8. Residues C43 and C112 are joined by a disulfide bond. The tract at residues 47–53 (TSESDYY) is CDR1. The tract at residues 71–81 (QEAYKQQNATE) is CDR2. N-linked (GlcNAc...) asparagine glycosylation is present at N78. The interval 112-124 (CAYRSAVNARLMF) is CDR3. A t cell receptor alpha joining 31 region spans residues 119 to 134 (NARLMFGDGTQLVVKP). The segment at 136–275 (IQNPDPAVYQ…LLMTLRLWSS (140 aa)) is t cell receptor alpha constant. The region spanning 154 to 242 (KSVCLFTDFD…LVEKSFETDT (89 aa)) is the Ig-like C1-type domain. A disulfide bridge links C157 with C207. N167, N201, N212, and N248 each carry an N-linked (GlcNAc...) asparagine glycan. The segment at 229 to 250 (CDVKLVEKSFETDTNLNFQNLS) is connecting peptide. A helical transmembrane segment spans residues 251-273 (VIGFRILLLKVAGFNLLMTLRLW). Residues 274-275 (SS) lie on the Cytoplasmic side of the membrane.

Disulfide-linked heterodimer with TRBV25-1*01J2S3*01C2*01 beta chain. The alpha-beta TR associates with the transmembrane signaling CD3 coreceptor proteins to form the TR-CD3 (TCR). The assembly of alpha-beta TR heterodimers with CD3 occurs in the endoplasmic reticulum where a single alpha-beta TR heterodimer associates with one CD3D-CD3E heterodimer, one CD3G-CD3E heterodimer and one CD247 homodimer forming a stable octameric structure. CD3D-CD3E and CD3G-CD3E heterodimers preferentially associate with TR alpha and TR beta chains (via TM domain), respectively. The association of the CD247 homodimer is the last step of TCR assembly in the endoplasmic reticulum and is required for transport to the cell surface. In terms of tissue distribution, expressed in MR1-restricted CD8-positive T cells.

The protein localises to the cell membrane. Functionally, the alpha chain of TRAV38-2DV8*01J31*01C*01/TRBV25-1*01J2S3*01C2*01 alpha-beta T cell receptor (TR) clonotype that displays pan-cancer cell recognition via the invariant MR1 molecule. On CD8-positive T cell clone MC.7.G5, likely recognizes tumor-specific or -associated metabolite(s) essential for cancer cell survival, triggering killing of many cancer cell types including lung, melanoma, leukemia, colon, breast, prostate, bone and ovarian cancer cells. Mediates cancer cell cytotoxicity in an HLA-independent manner. Has no reactivity to healthy cells, even stressed or infected by bacteria. Antigen recognition initiates TR-CD3 clustering on the cell surface and intracellular activation of LCK that phosphorylates the ITAM motifs of CD3G, CD3D, CD3E and CD247 enabling the recruitment of ZAP70. In turn, ZAP70 phosphorylates LAT, which recruits numerous signaling molecules to form the LAT signalosome. The LAT signalosome propagates signal branching to three major signaling pathways, the calcium, the mitogen-activated protein kinase (MAPK) kinase and the nuclear factor NF-kappa-B (NF-kB) pathways, leading to the mobilization of transcription factors that are critical for gene expression and essential for T cell differentiation into effector/memory T cells. This Homo sapiens (Human) protein is T cell receptor alpha chain MC.7.G5.